We begin with the raw amino-acid sequence, 524 residues long: Lycopene epsilon cyclase, chloroplastic (524 aa).

The N-terminal 45 residues, 1 to 45, are a transit peptide targeting the chloroplast; the sequence is MECVGARNFAAMAVSTFPSWSCRRKFPVVKRYSYRNIRFGLCSVR. 111-139 contacts NAD(+); sequence LVVIGCGPAGLALAAESAKLGLKVGLIGP. 2 consecutive transmembrane segments (helical) span residues 441-461 and 475-495; these read FFLFGLALIVQFDTEGIRSFF and FLGSTLTSGDLVLFALYMFVI.

The protein belongs to the lycopene cyclase family.

It localises to the plastid. The protein resides in the chloroplast membrane. It catalyses the reaction a carotenoid psi-end group = a carotenoid epsilon-end group. Its pathway is carotenoid biosynthesis; alpha-zeacarotene biosynthesis. It functions in the pathway carotenoid biosynthesis; delta-carotene biosynthesis. Its function is as follows. Involved in carotenoid biosynthesis. Catalyzes the single epsilon-cyclization reaction which converts lycopene to delta-carotene and neurosporene to alpha-zeacarotene. Required for lutein biosynthesis. This chain is Lycopene epsilon cyclase, chloroplastic, found in Arabidopsis thaliana (Mouse-ear cress).